The following is a 120-amino-acid chain: MHASSQIRLTFNQDHPAEHEDDSSGIAVQESKPALQAPPMYKVVLFNDDYTPMDFVVEVLETFFGMNRELATKIMLTVHTEGRAVCGVYTRDIAETKAMQVNQYARESQHPLLCEIEKDG.

The interval 9–32 (LTFNQDHPAEHEDDSSGIAVQESK) is disordered.

It belongs to the ClpS family. Binds to the N-terminal domain of the chaperone ClpA.

Its function is as follows. Involved in the modulation of the specificity of the ClpAP-mediated ATP-dependent protein degradation. This Ectopseudomonas mendocina (strain ymp) (Pseudomonas mendocina) protein is ATP-dependent Clp protease adapter protein ClpS.